Reading from the N-terminus, the 76-residue chain is UPF0346 protein LBA0976 (76 aa).

This sequence belongs to the UPF0346 family.

The protein is UPF0346 protein LBA0976 of Lactobacillus acidophilus (strain ATCC 700396 / NCK56 / N2 / NCFM).